Consider the following 977-residue polypeptide: Aspartate, glycine, lysine and serine-rich protein (977 aa).

The disordered stretch occupies residues 23–116 (GVLPDVDSGF…PITNLGSSTS (94 aa)). The span at 37–50 (EETKSEPKQPDTKP) shows a compositional bias: basic and acidic residues. Residues 51–63 (EQPSVSKPDSSVN) are compositionally biased toward polar residues. Asparagine 136 carries N-linked (GlcNAc...) asparagine glycosylation. Disordered regions lie at residues 246–767 (AGGG…TSRG) and 780–922 (GGGK…GSGL). The span at 251-278 (YYSDSSDSSDSDSSGSDSSESGSSESGS) shows a compositional bias: low complexity. The segment covering 309 to 325 (NGSPDNGTPGSGSSRYT) has biased composition (polar residues). The segment covering 410-427 (LEDELLGSDSSDEDDIDD) has biased composition (acidic residues). Over residues 428 to 443 (GLGGLGLGAGPGGPGG) the composition is skewed to gly residues. Composition is skewed to basic residues over residues 447–457 (TPKHKPRTDKK) and 465–540 (KRKP…VQRK). Residues 541 to 557 (QPREYKQESPEVEREHS) show a composition bias toward basic and acidic residues. Residues 572-583 (KILITSLTSSRG) show a composition bias toward low complexity. A compositionally biased stretch (gly residues) spans 591 to 643 (DGSGSGNGGGDDGNGGGAGNGGGAGNGGGAGNGGGAGNGGGNGGGGNGGGGND). Positions 660–675 (EHRNRCEDDDDYREKC) are enriched in basic and acidic residues. A compositionally biased stretch (low complexity) spans 700–724 (SGSSSSSSATESESSSTSTTPSTSS). Composition is skewed to polar residues over residues 730-744 (ILSTLSGRSQKTRSG), 758-767 (SRPSVATSRG), and 785-801 (STGTTVTSKPSTGTSSA). 3 stretches are compositionally biased toward low complexity: residues 803-814 (GLDLSGLLGQLG), 822-857 (GPKPDSKPSTGSPSTTSKPSTGSSSGPGLDLSGLLG), and 870-907 (KKPTASSKPTAPSTPSKSTGSSPGKGLDLSGLLGKLSP).

In terms of tissue distribution, component of the acid-insoluble and acid-soluble organic matrix of calcified layers of the shell (at protein level).

The protein localises to the secreted. The chain is Aspartate, glycine, lysine and serine-rich protein from Lottia gigantea (Giant owl limpet).